A 610-amino-acid polypeptide reads, in one-letter code: Elongation factor 4 (610 aa).

The tr-type G domain occupies 13–195 (SHIRNFSIVA…AIVHKLPAPK (183 aa)). Residues 25–30 (DHGKST) and 142–145 (NKID) contribute to the GTP site.

It belongs to the TRAFAC class translation factor GTPase superfamily. Classic translation factor GTPase family. LepA subfamily.

The protein localises to the cell inner membrane. The enzyme catalyses GTP + H2O = GDP + phosphate + H(+). Its function is as follows. Required for accurate and efficient protein synthesis under certain stress conditions. May act as a fidelity factor of the translation reaction, by catalyzing a one-codon backward translocation of tRNAs on improperly translocated ribosomes. Back-translocation proceeds from a post-translocation (POST) complex to a pre-translocation (PRE) complex, thus giving elongation factor G a second chance to translocate the tRNAs correctly. Binds to ribosomes in a GTP-dependent manner. The polypeptide is Elongation factor 4 (Rhizobium etli (strain ATCC 51251 / DSM 11541 / JCM 21823 / NBRC 15573 / CFN 42)).